A 388-amino-acid polypeptide reads, in one-letter code: MLKVKRLEEFNTCYNSNQLEKMAFFQCREEVEKVKCFLEKNSGDQDSRSGHNEAKEVWSNADLTERMPVKSKRTSALAVDIPAPPAPFDHRIVTAKQGAVNSFYTVSKTEILGGGRFGQVHKCEETATGLKLAAKIIKTRGMKDKEEVKNEISVMNQLDHANLIQLYDAFESKNDIVLVMEYVDGGELFDRIIDESYNLTELDTILFMKQICEGIRHMHQMYILHLDLKPENILCVNRDAKQIKIIDFGLARRYKPREKLKVNFGTPEFLAPEVVNYDFVSFPTDMWSVGVIAYMLLSGLSPFLGDNDAETLNNILACRWDLEDEEFQDISEEAKEFISKLLIKEKSWRISASEALKHPWLSDHKLHSRLNAQKKKNRGSDAQDFVTK.

Residues 106–361 (VSKTEILGGG…ASEALKHPWL (256 aa)) enclose the Protein kinase domain. ATP-binding positions include 112 to 120 (LGGGRFGQV) and Lys-135. Asp-227 (proton acceptor) is an active-site residue.

The protein belongs to the protein kinase superfamily. CAMK Ser/Thr protein kinase family.

The enzyme catalyses L-seryl-[protein] + ATP = O-phospho-L-seryl-[protein] + ADP + H(+). It carries out the reaction L-threonyl-[protein] + ATP = O-phospho-L-threonyl-[protein] + ADP + H(+). The protein is Myosin light chain kinase family member 4 (MYLK4) of Homo sapiens (Human).